The chain runs to 456 residues: Trigger factor (456 aa).

The PPIase FKBP-type domain maps to 166-245; it reads GDYANIDLNA…VNSVKAEELP (80 aa).

It belongs to the FKBP-type PPIase family. Tig subfamily.

The protein resides in the cytoplasm. It carries out the reaction [protein]-peptidylproline (omega=180) = [protein]-peptidylproline (omega=0). Involved in protein export. Acts as a chaperone by maintaining the newly synthesized protein in an open conformation. Functions as a peptidyl-prolyl cis-trans isomerase. This Bifidobacterium adolescentis (strain ATCC 15703 / DSM 20083 / NCTC 11814 / E194a) protein is Trigger factor.